A 424-amino-acid polypeptide reads, in one-letter code: GTPase Obg (424 aa).

The Obg domain maps to 1–160 (MFDRVEIRIK…YELILELKLI (160 aa)). Residues 161 to 328 (ADVAIIGYPN…LLDKVAEKLA (168 aa)) form the OBG-type G domain. GTP contacts are provided by residues 167 to 174 (GYPNVGKS), 192 to 196 (FTTLS), 213 to 216 (EVPG), 280 to 283 (NKID), and 309 to 311 (SAL). The Mg(2+) site is built by Ser-174 and Thr-194. The OCT domain occupies 349–424 (PAPKGKMGFH…IITGRLEWYL (76 aa)).

Belongs to the TRAFAC class OBG-HflX-like GTPase superfamily. OBG GTPase family. Monomer. It depends on Mg(2+) as a cofactor.

Its subcellular location is the cytoplasm. In terms of biological role, an essential GTPase which binds GTP, GDP and possibly (p)ppGpp with moderate affinity, with high nucleotide exchange rates and a fairly low GTP hydrolysis rate. Plays a role in control of the cell cycle, stress response, ribosome biogenesis and in those bacteria that undergo differentiation, in morphogenesis control. In Dehalococcoides mccartyi (strain ATCC BAA-2266 / KCTC 15142 / 195) (Dehalococcoides ethenogenes (strain 195)), this protein is GTPase Obg.